A 238-amino-acid chain; its full sequence is Segregation and condensation protein A (238 aa).

Belongs to the ScpA family. Component of a cohesin-like complex composed of ScpA, ScpB and the Smc homodimer, in which ScpA and ScpB bind to the head domain of Smc. The presence of the three proteins is required for the association of the complex with DNA.

It localises to the cytoplasm. In terms of biological role, participates in chromosomal partition during cell division. May act via the formation of a condensin-like complex containing Smc and ScpB that pull DNA away from mid-cell into both cell halves. This Macrococcus caseolyticus (strain JCSC5402) (Macrococcoides caseolyticum) protein is Segregation and condensation protein A.